Consider the following 370-residue polypeptide: MQAEKLAYYPFTSEASAYVGNLGISLESLLNSRAYRAARARGIERVKEALEGEIKKSPVSGEAQVLSELLSYPFARMLVACVDDQLFTRRYALAEAKAAYTFLRNENPDFLLEFGDDFGISADSQDSYFSMHFTDYIRFSNSLKDPSWKLTNRQLRAGKIKITKEEFSRLLEEAVRERIEQSFPVPEIPPEVSSFCSPYAAEIKDKFEVQKKKFGSTDFGAVKPELFPPCIAYALANVQGGVNLAHSMRFAMTSFLLNVGMSVDEILNLFNISPDFNAEKTLYQIEHIAGATGNTYKPPACDTMRTYGNCVGKDRLCEKISHPLGYYEKKVFIKNKEGEEAQGKEQGKEKDDGKEKENGKESEVKKKKEK.

The [4Fe-4S] cluster site is built by Cys-230, Cys-301, Cys-310, and Cys-317. The interval 337-370 is disordered; that stretch reads EGEEAQGKEQGKEKDDGKEKENGKESEVKKKKEK.

The protein belongs to the eukaryotic-type primase large subunit family. As to quaternary structure, heterodimer of a small subunit (PriS) and a large subunit (PriL). [4Fe-4S] cluster serves as cofactor.

Regulatory subunit of DNA primase, an RNA polymerase that catalyzes the synthesis of short RNA molecules used as primers for DNA polymerase during DNA replication. Stabilizes and modulates the activity of the small subunit, increasing the rate of DNA synthesis, and conferring RNA synthesis capability. The DNA polymerase activity may enable DNA primase to also catalyze primer extension after primer synthesis. May also play a role in DNA repair. The chain is DNA primase large subunit PriL from Methanosarcina mazei (strain ATCC BAA-159 / DSM 3647 / Goe1 / Go1 / JCM 11833 / OCM 88) (Methanosarcina frisia).